The primary structure comprises 859 residues: Kinesin-like protein KIN-14T (859 aa).

One can recognise a Kinesin motor domain in the interval 91–411 (NIRVFCRVKP…LNFATRAKNI (321 aa)). Residue 168 to 175 (GQTGTGKT) participates in ATP binding. Positions 422–463 (QAKKEAVMMNLQKMMEKIEQEREMSLRKMRNLNETLEKLTGK) form a coiled coil. A disordered region spans residues 511–530 (LSGADFSVTPNSSSFKSRRN). Over residues 518–530 (VTPNSSSFKSRRN) the composition is skewed to polar residues.

It belongs to the TRAFAC class myosin-kinesin ATPase superfamily. Kinesin family. KIN-14 subfamily.

The polypeptide is Kinesin-like protein KIN-14T (Arabidopsis thaliana (Mouse-ear cress)).